We begin with the raw amino-acid sequence, 101 residues long: Small ribosomal subunit protein uS14 (101 aa).

The protein belongs to the universal ribosomal protein uS14 family. In terms of assembly, part of the 30S ribosomal subunit. Contacts proteins S3 and S10.

Its function is as follows. Binds 16S rRNA, required for the assembly of 30S particles and may also be responsible for determining the conformation of the 16S rRNA at the A site. The sequence is that of Small ribosomal subunit protein uS14 from Francisella tularensis subsp. novicida (strain U112).